A 186-amino-acid chain; its full sequence is MKLPKTPFFSVFKPGYLAFVAFGLFLDLSSKYVIITKMYAHESIPVLGDFFRLSLTFNTGFVFGLFQDNALPSLFATGFAIVFLIFYRWENSDLGNAWGWNFVMAGAFGNFLDKFFVKIPGSGFRFGFTPEKPGIEFIGVVDFLDFEWPDFLLFDRWPAFNVADSCVSIGIVILLFTMDWKEMDKK.

A run of 4 helical transmembrane segments spans residues 8-28, 44-64, 66-86, and 97-117; these read FFSV…FLDL, IPVL…FVFG, FQDN…FLIF, and AWGW…KFFV. Catalysis depends on residues D142 and D164. The helical transmembrane segment at 157 to 177 threads the bilayer; the sequence is WPAFNVADSCVSIGIVILLFT.

The protein belongs to the peptidase A8 family.

It localises to the cell inner membrane. The catalysed reaction is Release of signal peptides from bacterial membrane prolipoproteins. Hydrolyzes -Xaa-Yaa-Zaa-|-(S,diacylglyceryl)Cys-, in which Xaa is hydrophobic (preferably Leu), and Yaa (Ala or Ser) and Zaa (Gly or Ala) have small, neutral side chains.. It functions in the pathway protein modification; lipoprotein biosynthesis (signal peptide cleavage). Functionally, this protein specifically catalyzes the removal of signal peptides from prolipoproteins. This is Lipoprotein signal peptidase from Leptospira biflexa serovar Patoc (strain Patoc 1 / ATCC 23582 / Paris).